The primary structure comprises 648 residues: Macrolide export ATP-binding/permease protein MacB (648 aa).

The ABC transporter domain occupies 5–243; sequence LELKDIRRSY…AGGTEPVVNT (239 aa). ATP is bound at residue 41-48; that stretch reads GASGSGKS. The next 4 helical transmembrane spans lie at 273–293, 523–543, 576–596, and 600–620; these read LLTM…VVVG, LFLT…VMNI, AVLV…LIAF, and LFLP…AFLC.

It belongs to the ABC transporter superfamily. Macrolide exporter (TC 3.A.1.122) family. As to quaternary structure, homodimer. Part of the tripartite efflux system MacAB-TolC, which is composed of an inner membrane transporter, MacB, a periplasmic membrane fusion protein, MacA, and an outer membrane component, TolC. The complex forms a large protein conduit and can translocate molecules across both the inner and outer membranes. Interacts with MacA.

It localises to the cell inner membrane. In terms of biological role, part of the tripartite efflux system MacAB-TolC. MacB is a non-canonical ABC transporter that contains transmembrane domains (TMD), which form a pore in the inner membrane, and an ATP-binding domain (NBD), which is responsible for energy generation. Confers resistance against macrolides. This is Macrolide export ATP-binding/permease protein MacB from Shigella sonnei (strain Ss046).